Reading from the N-terminus, the 180-residue chain is Large ribosomal subunit protein uL5 (180 aa).

The protein belongs to the universal ribosomal protein uL5 family. Part of the 50S ribosomal subunit; part of the 5S rRNA/L5/L18/L25 subcomplex. Contacts the 5S rRNA and the P site tRNA. Forms a bridge to the 30S subunit in the 70S ribosome.

Its function is as follows. This is one of the proteins that bind and probably mediate the attachment of the 5S RNA into the large ribosomal subunit, where it forms part of the central protuberance. In the 70S ribosome it contacts protein S13 of the 30S subunit (bridge B1b), connecting the 2 subunits; this bridge is implicated in subunit movement. Contacts the P site tRNA; the 5S rRNA and some of its associated proteins might help stabilize positioning of ribosome-bound tRNAs. This chain is Large ribosomal subunit protein uL5, found in Stenotrophomonas maltophilia (strain R551-3).